A 21-amino-acid chain; its full sequence is Nucleoside diphosphate kinase (21 aa).

The active-site Pros-phosphohistidine intermediate is the His4.

The protein belongs to the NDK family. In terms of assembly, homohexamer. The cofactor is Mg(2+).

The protein resides in the cytoplasm. The enzyme catalyses a 2'-deoxyribonucleoside 5'-diphosphate + ATP = a 2'-deoxyribonucleoside 5'-triphosphate + ADP. The catalysed reaction is a ribonucleoside 5'-diphosphate + ATP = a ribonucleoside 5'-triphosphate + ADP. Functionally, major role in the synthesis of nucleoside triphosphates other than ATP. The ATP gamma phosphate is transferred to the NDP beta phosphate via a ping-pong mechanism, using a phosphorylated active-site intermediate. The polypeptide is Nucleoside diphosphate kinase (NDK1) (Candida albicans (Yeast)).